Here is a 695-residue protein sequence, read N- to C-terminus: DNA ligase (695 aa).

NAD(+)-binding positions include aspartate 39 to aspartate 43, serine 88 to leucine 89, and glutamate 124. Residue lysine 126 is the N6-AMP-lysine intermediate of the active site. Arginine 147, glutamate 183, lysine 299, and lysine 323 together coordinate NAD(+). Residues cysteine 419, cysteine 422, cysteine 437, and cysteine 443 each coordinate Zn(2+). Positions proline 612–proline 695 constitute a BRCT domain.

Belongs to the NAD-dependent DNA ligase family. LigA subfamily. Mg(2+) serves as cofactor. Mn(2+) is required as a cofactor.

The catalysed reaction is NAD(+) + (deoxyribonucleotide)n-3'-hydroxyl + 5'-phospho-(deoxyribonucleotide)m = (deoxyribonucleotide)n+m + AMP + beta-nicotinamide D-nucleotide.. Functionally, DNA ligase that catalyzes the formation of phosphodiester linkages between 5'-phosphoryl and 3'-hydroxyl groups in double-stranded DNA using NAD as a coenzyme and as the energy source for the reaction. It is essential for DNA replication and repair of damaged DNA. The polypeptide is DNA ligase (Gluconacetobacter diazotrophicus (strain ATCC 49037 / DSM 5601 / CCUG 37298 / CIP 103539 / LMG 7603 / PAl5)).